We begin with the raw amino-acid sequence, 129 residues long: Glycine cleavage system H protein (129 aa).

The Lipoyl-binding domain maps to 22 to 103 (TGTVGITDYA…AHTAWIMKIE (82 aa)). The residue at position 63 (Lys-63) is an N6-lipoyllysine.

It belongs to the GcvH family. As to quaternary structure, the glycine cleavage system is composed of four proteins: P, T, L and H. Requires (R)-lipoate as cofactor.

Its function is as follows. The glycine cleavage system catalyzes the degradation of glycine. The H protein shuttles the methylamine group of glycine from the P protein to the T protein. The sequence is that of Glycine cleavage system H protein from Acidobacterium capsulatum (strain ATCC 51196 / DSM 11244 / BCRC 80197 / JCM 7670 / NBRC 15755 / NCIMB 13165 / 161).